Here is a 120-residue protein sequence, read N- to C-terminus: Large ribosomal subunit protein bL17 (120 aa).

This sequence belongs to the bacterial ribosomal protein bL17 family. As to quaternary structure, part of the 50S ribosomal subunit. Contacts protein L32.

In Geobacillus thermodenitrificans (strain NG80-2), this protein is Large ribosomal subunit protein bL17.